A 158-amino-acid chain; its full sequence is NADH-quinone oxidoreductase subunit B (158 aa).

[4Fe-4S] cluster contacts are provided by C37, C38, C102, and C132.

Belongs to the complex I 20 kDa subunit family. In terms of assembly, NDH-1 is composed of 14 different subunits. Subunits NuoB, C, D, E, F, and G constitute the peripheral sector of the complex. Requires [4Fe-4S] cluster as cofactor.

Its subcellular location is the cell inner membrane. It catalyses the reaction a quinone + NADH + 5 H(+)(in) = a quinol + NAD(+) + 4 H(+)(out). In terms of biological role, NDH-1 shuttles electrons from NADH, via FMN and iron-sulfur (Fe-S) centers, to quinones in the respiratory chain. Couples the redox reaction to proton translocation (for every two electrons transferred, four hydrogen ions are translocated across the cytoplasmic membrane), and thus conserves the redox energy in a proton gradient. The sequence is that of NADH-quinone oxidoreductase subunit B from Legionella pneumophila (strain Corby).